The chain runs to 318 residues: Malonyl-S-ACP:biotin-protein carboxyltransferase MADC (318 aa).

The CoA carboxyltransferase N-terminal domain occupies 2–257 (AKWTELQDKS…VLQKPMEEIE (256 aa)).

It is found in the cytoplasm. The enzyme catalyses N(6)-biotinyl-L-lysyl-[protein] + malonyl-[ACP] = N(6)-carboxybiotinyl-L-lysyl-[protein] + acetyl-[ACP]. In terms of biological role, gamma subunit of the biotin-dependent malonate decarboxylase multienzyme complex (EC 7.2.4.4). The two subunits MADC and MADD are required for the transfer of the malonate carboxy group from the acyl-carrier protein (ACP) to the prosthetic group of the biotin carrier MADF. Required for the regeneration of ACP. The polypeptide is Malonyl-S-ACP:biotin-protein carboxyltransferase MADC (madC) (Malonomonas rubra).